Consider the following 217-residue polypeptide: UPF0323 lipoprotein HPP12_0232 (217 aa).

The signal sequence occupies residues 1–27 (MKKPYRKISDYAIVGGLSALVMVSIVG). Residue Cys-28 is the site of N-palmitoyl cysteine attachment. Cys-28 is lipidated: S-diacylglycerol cysteine. Residues 160 to 171 (QRTYKSPQAYQR) show a composition bias toward polar residues. A disordered region spans residues 160–217 (QRTYKSPQAYQRSQNSFSKSAPSASSMGTASKGQSGFFGSSRPTSSPAISSGTRGFNS). The segment covering 172-185 (SQNSFSKSAPSASS) has biased composition (low complexity). The span at 186-197 (MGTASKGQSGFF) shows a compositional bias: polar residues. Residues 199–210 (SSRPTSSPAISS) are compositionally biased toward low complexity.

It belongs to the UPF0323 family.

The protein localises to the cell membrane. This is UPF0323 lipoprotein HPP12_0232 from Helicobacter pylori (strain P12).